A 151-amino-acid chain; its full sequence is Acidic phospholipase A2 1 (151 aa).

The N-terminal stretch at 1–27 (MYPAHLLVLLAVCVSLLGAASIPARPL) is a signal peptide. 7 disulfide bridges follow: cysteine 38/cysteine 104, cysteine 54/cysteine 151, cysteine 56/cysteine 72, cysteine 71/cysteine 132, cysteine 78/cysteine 125, cysteine 88/cysteine 118, and cysteine 111/cysteine 123. Tyrosine 55, glycine 57, and glycine 59 together coordinate Ca(2+). The active site involves histidine 75. A Ca(2+)-binding site is contributed by aspartate 76. Residue aspartate 126 is part of the active site.

Belongs to the phospholipase A2 family. Group I subfamily. D49 sub-subfamily. It depends on Ca(2+) as a cofactor. In terms of tissue distribution, expressed by the venom gland.

Its subcellular location is the secreted. The catalysed reaction is a 1,2-diacyl-sn-glycero-3-phosphocholine + H2O = a 1-acyl-sn-glycero-3-phosphocholine + a fatty acid + H(+). In terms of biological role, PLA2 catalyzes the calcium-dependent hydrolysis of the 2-acyl groups in 3-sn-phosphoglycerides. In Tropidechis carinatus (Australian rough-scaled snake), this protein is Acidic phospholipase A2 1.